The chain runs to 277 residues: Undecaprenyl-diphosphatase 1 (277 aa).

Helical transmembrane passes span 46–66, 95–115, 119–139, 165–185, 191–211, 216–236, and 256–276; these read VVGFSAVIQVGAIAAVLVYFF, WWVIYATIPIVIVGLAAKSLI, LASLWVVAASLIVGSGVMWAA, ILALLFPGFSRSGATMSTALI, VAATRLSFFLGIPALTGAGLY, ALGTGVGVAPLAVGTIVSFVV, and FVIYRIVIGVLLLGLLGTGVL.

Belongs to the UppP family.

The protein resides in the cell membrane. The catalysed reaction is di-trans,octa-cis-undecaprenyl diphosphate + H2O = di-trans,octa-cis-undecaprenyl phosphate + phosphate + H(+). Functionally, catalyzes the dephosphorylation of undecaprenyl diphosphate (UPP). Confers resistance to bacitracin. The polypeptide is Undecaprenyl-diphosphatase 1 (Streptomyces avermitilis (strain ATCC 31267 / DSM 46492 / JCM 5070 / NBRC 14893 / NCIMB 12804 / NRRL 8165 / MA-4680)).